Reading from the N-terminus, the 123-residue chain is Small ribosomal subunit protein uS12 (123 aa).

The interval 1 to 29 (MPTINQLVRKGREPQKAKSKVPAMEQNPQ) is disordered. At D89 the chain carries 3-methylthioaspartic acid.

Belongs to the universal ribosomal protein uS12 family. As to quaternary structure, part of the 30S ribosomal subunit. Contacts proteins S8 and S17. May interact with IF1 in the 30S initiation complex.

With S4 and S5 plays an important role in translational accuracy. Functionally, interacts with and stabilizes bases of the 16S rRNA that are involved in tRNA selection in the A site and with the mRNA backbone. Located at the interface of the 30S and 50S subunits, it traverses the body of the 30S subunit contacting proteins on the other side and probably holding the rRNA structure together. The combined cluster of proteins S8, S12 and S17 appears to hold together the shoulder and platform of the 30S subunit. This chain is Small ribosomal subunit protein uS12, found in Novosphingobium aromaticivorans (strain ATCC 700278 / DSM 12444 / CCUG 56034 / CIP 105152 / NBRC 16084 / F199).